The chain runs to 53 residues: GDFTWNSLSGRSVRLAPVDIQSLSELERARLQEVAFTRLHQDYDLGCQITMPK.

The protein resides in the cytoplasm. GTPase activator for the Rho-type GTPases by converting them to an inactive GDP-bound state. Could regulate the interactions of signaling molecules with the actin cytoskeleton. Promotes continuous elongation of cytoplasmic processes during cell motility and simultaneous retraction of the cell body changing the cell morphology. This Takifugu rubripes (Japanese pufferfish) protein is Rho GTPase-activating protein 6 (arhgap6).